The sequence spans 481 residues: Glutamyl-tRNA(Gln) amidotransferase subunit A (481 aa).

Catalysis depends on charge relay system residues Lys76 and Ser151. Ser175 functions as the Acyl-ester intermediate in the catalytic mechanism.

It belongs to the amidase family. GatA subfamily. In terms of assembly, heterotrimer of A, B and C subunits.

It catalyses the reaction L-glutamyl-tRNA(Gln) + L-glutamine + ATP + H2O = L-glutaminyl-tRNA(Gln) + L-glutamate + ADP + phosphate + H(+). Functionally, allows the formation of correctly charged Gln-tRNA(Gln) through the transamidation of misacylated Glu-tRNA(Gln) in organisms which lack glutaminyl-tRNA synthetase. The reaction takes place in the presence of glutamine and ATP through an activated gamma-phospho-Glu-tRNA(Gln). This Neisseria meningitidis serogroup C (strain 053442) protein is Glutamyl-tRNA(Gln) amidotransferase subunit A.